The sequence spans 282 residues: NH(3)-dependent NAD(+) synthetase (282 aa).

ATP is bound at residue 51-58 (GISGGVDS). Aspartate 57 provides a ligand contact to Mg(2+). Arginine 148 contacts deamido-NAD(+). ATP is bound at residue threonine 168. Mg(2+) is bound at residue glutamate 173. Deamido-NAD(+)-binding residues include lysine 181 and aspartate 188. ATP-binding residues include lysine 197 and threonine 219. Deamido-NAD(+) is bound at residue 268 to 269 (HK).

It belongs to the NAD synthetase family. In terms of assembly, homodimer.

It carries out the reaction deamido-NAD(+) + NH4(+) + ATP = AMP + diphosphate + NAD(+) + H(+). Its pathway is cofactor biosynthesis; NAD(+) biosynthesis; NAD(+) from deamido-NAD(+) (ammonia route): step 1/1. Catalyzes the ATP-dependent amidation of deamido-NAD to form NAD. Uses ammonia as a nitrogen source. The sequence is that of NH(3)-dependent NAD(+) synthetase from Burkholderia ambifaria (strain MC40-6).